A 128-amino-acid polypeptide reads, in one-letter code: PFMFRPRKQVFPDPRSGSVINGSNPTAERPCQQSYGISFYGFARCQRGRPKSNEDYKDIKFSIGCMGKCKRNTKQPRVLEAALEQMCAADCRDDNSSDASGPFDSALLRNIDGRRDYKPDKSVRRNSS.

Disordered regions lie at residues 1–27 and 92–128; these read PFMF…NPTA and RDDN…RNSS. Positions 18-27 are enriched in polar residues; sequence SVINGSNPTA. A compositionally biased stretch (basic and acidic residues) spans 111–128; sequence IDGRRDYKPDKSVRRNSS.

It belongs to the encephalomyocarditis virus protein 2B* family.

The chain is Protein 2B* from Aotus trivirgatus (Three-striped night monkey).